The primary structure comprises 795 residues: MKFSELWLREWVNPAIDSDALANQITMAGLEVDGVEPVAGSFNGVVVGEVVECAQHPNADKLRVTKVNVGGERLLDIVCGAPNCRQGLKVAVATIGAILPGDFKIKAAKLRGEPSEGMLCSFSELGISDDHSGIIELPADAPLGTDIREYLKLDDNTIEISVTPNRADCLGIIGVARDVAVLNKAPLQEPEMAPVTATISDTLPITVEAADACPRYLGRVVKGINVNAPTPLWMKEKLRRCGIRSIDAVVDVTNYVLLELGQPMHAFDKDRIDGGIVVRMAKEGETVVLLDGSEATLNADTLVIADHHKALGIAGIFGGEHSGVNGETQNVLLECAYFNPLSITGRARRHGLHTDASHRYERGVDPALQYKAIERATRLLLDICGGDAGPIIDVSNEATLPKRATITLRRSKLDRLIGHHIADEQVSDILRRLGCEVTEGQDEWKAVAPTWRFDMEIEEDLVEEVVRVYGYNNIPDEPIQAGLIMGTHREADLSLKRVKTMLNDKGYQEVITYSFVDPKVQQLIHPGAEALLLPNPISVEMSAMRLSLWSGLLATVVYNQNRQQNRVRIFETGLRFVPDTQANLGIRQDLMLAGVICGNRYDEHWNLAKETVDFYDLKGDLEAVLDLTGKLGDIQFKAEMNPALHPGQSAAIYLKDERIGFIGVVHPELERKLDLNGRTLVFELEWNKLADRIVPQAREISRFPANRRDIAVVVAENVPAADILSECKKVGVNQVVGVNLFDVYRGKGVAEGYKSLAISLILQDTNRTLEEEEIAATVAKCVEALKERFQASLRD.

The region spanning 39–148 (AGSFNGVVVG…ADAPLGTDIR (110 aa)) is the tRNA-binding domain. Residues 401–476 (PKRATITLRR…RVYGYNNIPD (76 aa)) form the B5 domain. Mg(2+)-binding residues include Asp454, Asp460, Glu463, and Glu464. In terms of domain architecture, FDX-ACB spans 701-794 (SRFPANRRDI…LKERFQASLR (94 aa)).

It belongs to the phenylalanyl-tRNA synthetase beta subunit family. Type 1 subfamily. In terms of assembly, tetramer of two alpha and two beta subunits. Mg(2+) serves as cofactor.

The protein resides in the cytoplasm. It carries out the reaction tRNA(Phe) + L-phenylalanine + ATP = L-phenylalanyl-tRNA(Phe) + AMP + diphosphate + H(+). The sequence is that of Phenylalanine--tRNA ligase beta subunit from Salmonella paratyphi A (strain ATCC 9150 / SARB42).